Here is a 472-residue protein sequence, read N- to C-terminus: MSCGIANAIRWDVSLLIHRSMSSSMSSVQPTSPVSDSPSLGEMHASVAVSRRGHWGFRLLAFLGPGYMVSVGYMDPGNWATGLAGGSRFGYMLLSVILLSNVMAIVLQALAARLGIASDMDLAQACRARYSRGTTLALWVVCELAIIACDLAEVIGTAIALNLLLGVPIIWGVVITAVDVVLVLLLMHRGFRALEAFVIALLLVIFGCFVVQIVLAAPPLQEVLGGFVPRWQVVADPQALYLAIGIVGATVMPHNLYLHSSIVQTRAYPRTPVGRRSALRWAVADSTLALMLALFINASILILAAAVFHAQHHFDVEEIEQAYQLLAPVLGVGVAATLFATALLASGINSTVTATLAGQIVMEGFLRLRLRPWLRRVLTRGLAIVPVIVVVALYGEQGTGRLLLLSQVILSMQLPFAVIPLLRCVADRKVMGALVAPRWLMVVAWLIAGVIVVLNVKLLGDYAVHLMVGVSD.

The next 11 helical transmembrane spans lie at 59-79, 92-112, 136-156, 167-187, 196-216, 233-253, 288-308, 325-345, 377-397, 402-422, and 439-459; these read LLAF…PGNW, MLLS…ALAA, LALW…EVIG, VPII…LLLM, AFVI…IVLA, VVAD…TVMP, LALM…AAVF, LLAP…ALLA, VLTR…YGEQ, LLLL…IPLL, and WLMV…VKLL.

The protein belongs to the NRAMP family.

The protein resides in the cell inner membrane. Its function is as follows. H(+)-stimulated, divalent metal cation uptake system. The protein is Divalent metal cation transporter MntH of Xylella fastidiosa (strain 9a5c).